The chain runs to 470 residues: Cysteine--tRNA ligase (470 aa).

Zn(2+) is bound at residue C27. The 'HIGH' region motif lies at 29-39 (PTVYNFFHIGN). 3 residues coordinate Zn(2+): C211, H236, and E240. The 'KMSKS' region motif lies at 268 to 272 (KMSKS). K271 contacts ATP.

The protein belongs to the class-I aminoacyl-tRNA synthetase family. In terms of assembly, monomer. Zn(2+) serves as cofactor.

The protein localises to the cytoplasm. It carries out the reaction tRNA(Cys) + L-cysteine + ATP = L-cysteinyl-tRNA(Cys) + AMP + diphosphate. The polypeptide is Cysteine--tRNA ligase (Clostridium botulinum (strain Alaska E43 / Type E3)).